The primary structure comprises 990 residues: Putative ariadne-like RING finger protein R811 (990 aa).

Residues 8–201 (DLAIVVDATG…IITQTTIKLL (194 aa)) enclose the VWFA domain. Residues 797 to 990 (EKGLCMICFN…GGAFEYDQDD (194 aa)) are TRIAD supradomain. Positions 801, 804, 827, and 830 each coordinate Zn(2+). The segment at 801 to 854 (CMICFNEFSKSNLRQICGRKVCQSVACYDCMKSWYGENKVGDLIHVNALTCPFC) adopts an RING-type 1 zinc-finger fold. The IBR-type zinc-finger motif lies at 855–903 (KQCPMFNILAAFNRQVCAMVRTNNSFDIDWWYGWCLKCFQPKKVVEKEC). C930 and C935 together coordinate Zn(2+). The segment at 930–961 (CPNSLCKIPIIKDGGCNHMECTACKKHFCWLC) adopts an RING-type 2; atypical zinc-finger fold. Residue C945 is part of the active site. Residues C950 and C953 each contribute to the Zn(2+) site.

The protein is Putative ariadne-like RING finger protein R811 of Acanthamoeba polyphaga (Amoeba).